Here is a 737-residue protein sequence, read N- to C-terminus: Prospero homeobox protein 1 (737 aa).

An interaction with RORG region spans residues Met-1–Gly-28. Residues Lys-103 to Asp-135 show a composition bias toward polar residues. The disordered stretch occupies residues Lys-103–Pro-147. Residues Ser-177, Ser-179, Ser-199, Ser-291, and Ser-295 each carry the phosphoserine modification. Positions His-178–Phe-221 are disordered. The segment covering Met-320–Gly-337 has biased composition (basic and acidic residues). Disordered regions lie at residues Met-320–Glu-344 and Arg-444–Thr-476. Residue Lys-324 forms a Glycyl lysine isopeptide (Lys-Gly) (interchain with G-Cter in SUMO2) linkage. Over residues Leu-464–Thr-476 the composition is skewed to polar residues. A phosphoserine mark is found at Ser-511 and Ser-514. Residues Arg-525–Ala-547 are disordered. Position 557 is a phosphoserine (Ser-557). The region spanning Gln-577–Met-635 is the Prospero-type homeo domain. Positions Gln-577–Leu-735 are homeo-Prospero. Positions Glu-636–Leu-735 constitute a Prospero domain. The essential for nuclear localization, interaction with RORG, repression of RORG transcriptional activator activity stretch occupies residues Glu-723–Asn-729.

Belongs to the Prospero homeodomain family. As to quaternary structure, interacts with RORA and RORG (via AF-2 motif). As to expression, expressed in the young neurons of the subventricular region of the CNS, developing eye lens and pancreas. It is also found in the developing liver, heart and skeletal muscle. In the eye, expressed in the lens and retina at postnatal day 10. In the retina, localized to the inner nuclear layer. In the lens, localized to epithelial and fiber cells.

The protein resides in the nucleus. Transcription factor involved in developmental processes such as cell fate determination, gene transcriptional regulation and progenitor cell regulation in a number of organs. Plays a critical role in embryonic development and functions as a key regulatory protein in neurogenesis and the development of the heart, eye lens, liver, pancreas and the lymphatic system. Involved in the regulation of the circadian rhythm. Represses: transcription of the retinoid-related orphan receptor RORG, transcriptional activator activity of RORA and RORG and the expression of RORA/G-target genes including core clock components: BMAL1, NPAS2 and CRY1 and metabolic genes: AVPR1A and ELOVL3. This is Prospero homeobox protein 1 (Prox1) from Mus musculus (Mouse).